We begin with the raw amino-acid sequence, 714 residues long: G protein-coupled receptor kinase 2 (714 aa).

The N-terminal stretch occupies residues 1–308 (MELENIVANT…LEAQPITYKT (308 aa)). 2 RGS domains span residues 53-174 (YGYV…SQHS) and 177-294 (INHK…HRYL). The tract at residues 141 to 229 (SNANPTETAE…GGGEGGGGGK (89 aa)) is disordered. A compositionally biased stretch (low complexity) spans 154–175 (CNNTTANNCNNINNSNNSQHSS). Composition is skewed to basic and acidic residues over residues 176–190 (DINH…HNGD) and 199–220 (HQDD…EKGG). The Protein kinase domain maps to 309–574 (FRMYRVLGKG…GQDVMAHPFF (266 aa)). Residues 315–323 (LGKGGFGEV) and Lys-338 each bind ATP. Residue Asp-435 is the Proton acceptor of the active site. The AGC-kinase C-terminal domain occupies 577 to 642 (TQLNWRRLEA…GSVSISWQNE (66 aa)). Ser-612 is modified (phosphoserine). A Phosphothreonine modification is found at Thr-613. The interval 667 to 714 (INAAPEPDKAGCFPFRRKKKQPARTQPIPIPEHLLTTSHSVSSTTVES) is disordered. Residues 698–714 (EHLLTTSHSVSSTTVES) show a composition bias toward low complexity.

Belongs to the protein kinase superfamily. AGC Ser/Thr protein kinase family. GPRK subfamily. Expressed in all larval tissues and in adult ovaries. Larval CNS staining is localized to axons projecting to the optic lobes and the mushroom bodies, in the longitudinal connectives, and in cell bodies and nerves of the ring gland corpus allatum. Adult CNS staining is detectable only in cell bodies and processes associated with the ellipsoid body of the central complex and portions of the mushroom bodies. In the wing disk, expression is confined to a stripe that parallels the anterior/posterior boundary of the wing blade and the hinge region, and weak expression in the prospective notum.

It is found in the membrane. It carries out the reaction [G-protein-coupled receptor] + ATP = [G-protein-coupled receptor]-phosphate + ADP + H(+). Specifically phosphorylates the activated forms of G protein-coupled receptors. Required during oogenesis and embryogenesis; component of a signaling pathway that functions during egg chamber maturation. In Drosophila melanogaster (Fruit fly), this protein is G protein-coupled receptor kinase 2 (Gprk2).